The chain runs to 1378 residues: DNA-directed RNA polymerase subunit beta (1378 aa).

It belongs to the RNA polymerase beta chain family. As to quaternary structure, the RNAP catalytic core consists of 2 alpha, 1 beta, 1 beta' and 1 omega subunit. When a sigma factor is associated with the core the holoenzyme is formed, which can initiate transcription.

The enzyme catalyses RNA(n) + a ribonucleoside 5'-triphosphate = RNA(n+1) + diphosphate. Functionally, DNA-dependent RNA polymerase catalyzes the transcription of DNA into RNA using the four ribonucleoside triphosphates as substrates. This is DNA-directed RNA polymerase subunit beta from Agrobacterium fabrum (strain C58 / ATCC 33970) (Agrobacterium tumefaciens (strain C58)).